The sequence spans 3753 residues: Intermembrane lipid transfer protein VPS13C (3753 aa).

The 114-residue stretch at 3–116 folds into the Chorein N-terminal domain; that stretch reads LESVVADLLN…LQDVKQKELS (114 aa). S132 carries the post-translational modification Phosphoserine. The span at 150–164 shows a compositional bias: basic residues; sequence GRKRKKHKKHFKKPF. The interval 150 to 176 is disordered; the sequence is GRKRKKHKKHFKKPFKGLDRSKDKPKE. Residues 165-176 are compositionally biased toward basic and acidic residues; it reads KGLDRSKDKPKE. T614 bears the Phosphothreonine mark. Phosphoserine is present on S619. Position 624 is a phosphothreonine (T624). 4 positions are modified to phosphoserine: S737, S842, S872, and S874. Residues 877-883 carry the FFAT motif; it reads EYFDAED. A phosphoserine mark is found at S1979 and S2473. Residues 2415–3309 form a required for late endosome/lysosome localization region; it reads DYSLKDRAPF…IQQDIDALNA (895 aa). The SHR-BD domain maps to 2766–3016; the sequence is LSVFSPYWLI…RLFAWADPTG (251 aa). Residues 3310 to 3753 are required for lipid droplet localization; that stretch reads ELMETSMTDM…VRLLRPQLPS (444 aa). Omega-N-methylarginine occurs at positions 3519 and 3526. K3538 is subject to N6-acetyllysine. Phosphoserine is present on S3641.

This sequence belongs to the VPS13 family. In terms of tissue distribution, widely expressed.

It localises to the mitochondrion outer membrane. It is found in the lipid droplet. The protein localises to the endoplasmic reticulum membrane. Its subcellular location is the lysosome membrane. The protein resides in the late endosome membrane. Its function is as follows. Mediates the transfer of lipids between membranes at organelle contact sites. Necessary for proper mitochondrial function and maintenance of mitochondrial transmembrane potential. Involved in the regulation of PINK1/PRKN-mediated mitophagy in response to mitochondrial depolarization. The polypeptide is Intermembrane lipid transfer protein VPS13C (Homo sapiens (Human)).